We begin with the raw amino-acid sequence, 1472 residues long: Adhesion G protein-coupled receptor L1 (1472 aa).

The signal sequence occupies residues 1-24; it reads MARLAAVLWSLCVTAILVTSATQG. Residues 25-857 lie on the Extracellular side of the membrane; the sequence is LSRAGLPFGL…EIYQGRINEL (833 aa). The region spanning 40–129 is the SUEL-type lectin domain; the sequence is ACEGYPIELR…KYLEVQYDCV (90 aa). 5 disulfide bridges follow: Cys41–Cys71, Cys50–Cys128, Cys83–Cys115, Cys96–Cys102, and Cys140–Cys322. Residue Glu42 participates in alpha-L-rhamnose binding. Asn98 carries N-linked (GlcNAc...) asparagine glycosylation. 117–120 is an alpha-L-rhamnose binding site; it reads GTYK. The 260-residue stretch at 139-398 folds into the Olfactomedin-like domain; that stretch reads VCPGTLQKVL…VVRYSLEFGP (260 aa). The segment at 400 to 468 is disordered; that stretch reads DPSAGPATSP…APAPSTRRPP (69 aa). The span at 405–441 shows a compositional bias: low complexity; that stretch reads PATSPPLSTTTTARPTPLTSTASPAATTPLRRAPLTT. The span at 453-468 shows a compositional bias: pro residues; sequence DLPPATAPAPSTRRPP. 2 disulfides stabilise this stretch: Cys480–Cys515 and Cys503–Cys532. Residues Asn531, Asn640, Asn741, Asn800, Asn805, and Asn826 are each glycosylated (N-linked (GlcNAc...) asparagine). The GAIN-B domain occupies 669-850; it reads PARFLAAKQN…AVLMAHREIY (182 aa). 2 disulfides stabilise this stretch: Cys801–Cys832 and Cys820–Cys834. The GPS stretch occupies residues 801-850; it reads CSFWNYSERSMLGYWSTQGCRLVESNKTHTTCACSHLTNFAVLMAHREIY. The chain crosses the membrane as a helical span at residues 858 to 878; it reads LLSVITWVGIVISLVCLAICI. The Cytoplasmic portion of the chain corresponds to 879–892; the sequence is STFCFLRGLQTDRN. Residues 893–913 form a helical membrane-spanning segment; sequence TIHKNLCINLFLAELLFLVGI. At 914–919 the chain is on the extracellular side; that stretch reads DKTQYE. A helical membrane pass occupies residues 920–940; that stretch reads IACPIFAGLLHYFFLAAFSWL. The Cytoplasmic portion of the chain corresponds to 941–963; it reads CLEGVHLYLLLVEVFESEYSRTK. The chain crosses the membrane as a helical span at residues 964-984; it reads YYYLGGYCFPALVVGIAAAID. Topologically, residues 985–1001 are extracellular; sequence YRSYGTEKACWLRVDNY. A helical transmembrane segment spans residues 1002 to 1022; that stretch reads FIWSFIGPVSFVIVVNLVFLM. At 1023–1049 the chain is on the cytoplasmic side; sequence VTLHKMVRSSSVLKPDSSRLDNIKSWA. Residues 1050-1070 traverse the membrane as a helical segment; the sequence is LGAIALLFLLGLTWAFGLLFI. Over 1071–1074 the chain is Extracellular; sequence NKES. A helical membrane pass occupies residues 1075–1095; the sequence is VVMAYLFTTFNAFQGVFIFVF. At 1096–1472 the chain is on the cytoplasmic side; that stretch reads HCALQKKVHK…DGQMQLVTSL (377 aa). Omega-N-methylarginine is present on Arg1193. A Phosphoserine modification is found at Ser1219. Disordered regions lie at residues 1247-1271, 1291-1325, 1358-1427, and 1449-1472; these read FNNS…PRGR, NLRG…GGPG, ESES…SRPP, and YLAA…VTSL. Composition is skewed to pro residues over residues 1301-1313 and 1406-1418; these read GPPP…PPVP and ALPP…PGPP. Ser1471 is modified (phosphoserine).

This sequence belongs to the G-protein coupled receptor 2 family. Adhesion G-protein coupled receptor (ADGR) subfamily. Forms a heterodimer, consisting of a large extracellular region (p120) non-covalently linked to a seven-transmembrane moiety (p85). Interacts with syntaxin and with proteins of the SHANK family via the PDZ domain. Interacts (via extracellular domain) with FLRT1, FLRT2 and FLRT3 (via extracellular domain). Autoproteolytically cleaved into 2 subunits, an extracellular subunit and a seven-transmembrane subunit. This proteolytic processing takes place early in the biosynthetic pathway, either in the endoplasmic reticulum or in the early compartment of the Golgi apparatus. In terms of tissue distribution, brain-specific expression but low levels are also detected in kidney, lung and spleen.

It is found in the cell membrane. The protein resides in the cell projection. It localises to the axon. Its subcellular location is the growth cone. The protein localises to the synapse. It is found in the presynaptic cell membrane. The protein resides in the synaptosome. Its function is as follows. Calcium-independent receptor of high affinity for alpha-latrotoxin, an excitatory neurotoxin present in black widow spider venom which triggers massive exocytosis from neurons and neuroendocrine cells. Receptor for TENM2 that mediates heterophilic synaptic cell-cell contact and postsynaptic specialization. Receptor probably implicated in the regulation of exocytosis. The protein is Adhesion G protein-coupled receptor L1 of Bos taurus (Bovine).